The chain runs to 518 residues: Histone deacetylase 1 (518 aa).

A histone deacetylase region spans residues 22-333; the sequence is RRVCYFYDAE…WCYETGVALG (312 aa). His-153 serves as the catalytic Proton donor/acceptor. 3 residues coordinate Zn(2+): Asp-188, His-190, and Asp-276. Residues 387–518 are disordered; the sequence is HAPSVQFQER…QDQPSVHQKT (132 aa). Residues 401–412 show a composition bias toward acidic residues; it reads ELPEQDEDQEDP. Positions 413–435 are enriched in basic and acidic residues; the sequence is DERHHADSDVEMDDVKPLDDSGR. The segment covering 503–518 has biased composition (polar residues); the sequence is DNSNKLQDQPSVHQKT.

The protein belongs to the histone deacetylase family. HD Type 1 subfamily. As to quaternary structure, interacts with TPR3. Requires Zn(2+) as cofactor. As to expression, expressed in roots and leaves.

It is found in the nucleus. It carries out the reaction N(6)-acetyl-L-lysyl-[histone] + H2O = L-lysyl-[histone] + acetate. Functionally, responsible for the deacetylation of lysine residues on the N-terminal part of the core histones (H2A, H2B, H3 and H4). Histone deacetylation gives a tag for epigenetic repression and plays an important role in transcriptional regulation, cell cycle progression and developmental events. Histone deacetylases act via the formation of large multiprotein complexes. Negatively regulates the expression of the NAC48/NAC6 gene that controls root growth in seedlings. Epigenetically represses the expression of NAC48/NAC6 by deacetylating 'Lys-9' (H3K9ac), 'Lys-14' (H3K14ac) and 'Lys-18' (H3K18ac) of histone H3, and 'Lys-5' (H4K5ac), 'Lys-12' (H4K12ac) and 'Lys-16' (H4K16ac) of histone H4. Functions in the regulation of gene expression in the whole genome. Acts as a chromatin remodeling regulator to promote the formation of a repressive chromatin state. Functions with MODD via its interaction with TPR3, to down-regulates the histone acetylation level at BZIP46 target genes. BZIP46 is a positive regulator of abscisic acid (ABA) signaling and drought stress tolerance. This is Histone deacetylase 1 from Oryza sativa subsp. japonica (Rice).